The primary structure comprises 889 residues: Translation initiation factor IF-2 (889 aa).

Disordered stretches follow at residues 47–85 (GHLK…AKSV) and 206–302 (AEAA…FTKP). Basic and acidic residues-rich tracts occupy residues 52-61 (QHGDESEAKP), 214-241 (AAKK…KEVV), and 252-263 (AEDKSDSADESG). Residues 389-558 (TRAPVVTIMG…LLQSEVLELT (170 aa)) enclose the tr-type G domain. The G1 stretch occupies residues 398–405 (GHVDHGKT). Position 398-405 (398-405 (GHVDHGKT)) interacts with GTP. The tract at residues 423–427 (GITQH) is G2. The segment at 444–447 (DTPG) is G3. GTP contacts are provided by residues 444–448 (DTPGH) and 498–501 (NKMD). Positions 498–501 (NKMD) are G4. Positions 534 to 536 (SAK) are G5.

This sequence belongs to the TRAFAC class translation factor GTPase superfamily. Classic translation factor GTPase family. IF-2 subfamily.

The protein localises to the cytoplasm. In terms of biological role, one of the essential components for the initiation of protein synthesis. Protects formylmethionyl-tRNA from spontaneous hydrolysis and promotes its binding to the 30S ribosomal subunits. Also involved in the hydrolysis of GTP during the formation of the 70S ribosomal complex. The protein is Translation initiation factor IF-2 of Colwellia psychrerythraea (strain 34H / ATCC BAA-681) (Vibrio psychroerythus).